We begin with the raw amino-acid sequence, 584 residues long: Probable DNA ligase (584 aa).

Residue E248 coordinates ATP. Residue K250 is the N6-AMP-lysine intermediate of the active site. ATP is bound by residues R255, R270, E299, F339, R416, and K422.

The protein belongs to the ATP-dependent DNA ligase family. Mg(2+) serves as cofactor.

The catalysed reaction is ATP + (deoxyribonucleotide)n-3'-hydroxyl + 5'-phospho-(deoxyribonucleotide)m = (deoxyribonucleotide)n+m + AMP + diphosphate.. Its function is as follows. DNA ligase that seals nicks in double-stranded DNA during DNA replication, DNA recombination and DNA repair. The chain is Probable DNA ligase from Aquifex aeolicus (strain VF5).